Reading from the N-terminus, the 445-residue chain is MTTILKSLPKGENVGIAFSGGLDTSAALLWMKQKGARVFAYTANLGQPDEADYDEIPRKAMEFGAEKARLVDCRSQLVHEGIAAIQSGAFHVSTGGIAYFNTTPLGRAVTGTMLVSAMKEDGVNIWGDGSTYKGNDIERFYRYGLLTNPELRIYKPWLDQQFIDELGGRAEMSAFMTAHGFAYKMSAEKAYSTDSNLLGATHEAKDLEHLDSGIKIVNPIMGVPFWRDDCAVKAETVTVRFEEGQPVALNGQSFADPVALFLEANAIGGRHGLGMSDQIENRIIEAKSRGIYEAPGMALLHIAYERLVTGIHNEDTIEQYRISGMRLGRLLYQGRWFDSQALMLRETAQRWVARAITGEVTLELRRGNDYSIMNTESPNLTYAPERLSMEKVEDAPFTPGDRIGQLTMRNLDIADTRAKLDIFAKAGLLSAGEGSHIPKLENDKG.

ATP-binding positions include 17–25 (AFSGGLDTS) and alanine 43. Tyrosine 99 serves as a coordination point for L-citrulline. ATP is bound by residues glycine 129 and threonine 131. Threonine 131, asparagine 135, and aspartate 136 together coordinate L-aspartate. An L-citrulline-binding site is contributed by asparagine 135. Aspartate 136 serves as a coordination point for ATP. L-citrulline contacts are provided by arginine 139 and serine 192. Aspartate 194 contacts ATP. 3 residues coordinate L-citrulline: threonine 201, glutamate 203, and glutamate 280.

It belongs to the argininosuccinate synthase family. Type 2 subfamily. In terms of assembly, homotetramer.

It is found in the cytoplasm. The enzyme catalyses L-citrulline + L-aspartate + ATP = 2-(N(omega)-L-arginino)succinate + AMP + diphosphate + H(+). The protein operates within amino-acid biosynthesis; L-arginine biosynthesis; L-arginine from L-ornithine and carbamoyl phosphate: step 2/3. The polypeptide is Argininosuccinate synthase (Rhodopseudomonas palustris (strain BisB5)).